The sequence spans 423 residues: Glutamyl-tRNA reductase 2 (423 aa).

Residues 48 to 51 (TCYR), S103, 108 to 110 (EPQ), and Q114 each bind substrate. Residue C49 is the Nucleophile of the active site. 183 to 188 (GAGEMA) contributes to the NADP(+) binding site.

Belongs to the glutamyl-tRNA reductase family. As to quaternary structure, homodimer.

It carries out the reaction (S)-4-amino-5-oxopentanoate + tRNA(Glu) + NADP(+) = L-glutamyl-tRNA(Glu) + NADPH + H(+). Its pathway is porphyrin-containing compound metabolism; protoporphyrin-IX biosynthesis; 5-aminolevulinate from L-glutamyl-tRNA(Glu): step 1/2. In terms of biological role, catalyzes the NADPH-dependent reduction of glutamyl-tRNA(Glu) to glutamate 1-semialdehyde (GSA). This chain is Glutamyl-tRNA reductase 2, found in Anaeromyxobacter sp. (strain Fw109-5).